The sequence spans 124 residues: Kinocilin (124 aa).

The next 2 membrane-spanning stretches (helical) occupy residues 13–33 and 40–60; these read LQLA…GVSV and VGGI…YPFL. Residues 80–124 form a disordered region; the sequence is PNSGPDHGEGRSSNNSNKEGARSGLSTVTRTLEKLKPGGRGTEEG. Positions 90 to 109 are enriched in polar residues; it reads RSSNNSNKEGARSGLSTVTR. Residues 110–124 are compositionally biased toward basic and acidic residues; it reads TLEKLKPGGRGTEEG.

In terms of tissue distribution, preferentially expressed in the inner ear and testis. Localizes mainly in the kinocilium of sensory cells in the inner ear. Also present in the manchette of the spermatids, a transient structure enriched in interconnected microtubules (at protein level).

The protein localises to the membrane. Functionally, may play a role in stabilizing dense microtubular networks or in vesicular trafficking. This Mus musculus (Mouse) protein is Kinocilin (Kncn).